A 299-amino-acid chain; its full sequence is tRNA dimethylallyltransferase (299 aa).

13 to 20 (GPTASGKT) lines the ATP pocket. 15-20 (TASGKT) contributes to the substrate binding site. An interaction with substrate tRNA region spans residues 38–41 (DSRQ).

This sequence belongs to the IPP transferase family. Monomer. Mg(2+) serves as cofactor.

The catalysed reaction is adenosine(37) in tRNA + dimethylallyl diphosphate = N(6)-dimethylallyladenosine(37) in tRNA + diphosphate. Functionally, catalyzes the transfer of a dimethylallyl group onto the adenine at position 37 in tRNAs that read codons beginning with uridine, leading to the formation of N6-(dimethylallyl)adenosine (i(6)A). In Prochlorococcus marinus (strain MIT 9515), this protein is tRNA dimethylallyltransferase.